A 744-amino-acid chain; its full sequence is MGSGASKNTEEDDDGSNGGGGQLYVSLKMENSKVEGELTPHVYGSLPLIGSWDPSKALPMQRESALMSELSFVVPPDHETLDFKFLLKPKNRNTPCIVEEGENRLLTGGSLQGDARLALFRLEGDVIVEFRVFINADRVSPIDLATSWRAYRENLQPSTVRGIPDVSINPDPKSAECPLESLELDLAHYEVPAPAPSANSYLVYAADNAENPRSLSASGSFRNDSTPKAAQRNSEDSGVTVDGSPSAKEMTIVVPDSSNIYSAFGEAESKSVETLSPFQQKDGQKGLFVDRGVGSPRLVKSLSASSFLIDTKQIKNSMPAAAGAVAAAAVADQMLGPKEDRHLAIVLVGLPARGKTFTAAKLTRYLRWLGHDTKHFNVGKYRRLKHGVNMSADFFRADNPEGVEARTEVAALAMEDMIAWMQEGGQVGIFDATNSTRVRRNMLMKMAEGKCKIIFLETLCNDERIIERNIRLKIQQSPDYSEEMDFEAGVRDFRDRLANYEKVYEPVEEGSYIKMIDMVSGNGGQIQVNNISGYLPGRIVFFLVNTHLTPRPILLTRHGESMDNVRGRIGGDSVISDSGKLYAKKLASFVEKRLKSEKAASIWTSTLQRTNLTASSIVGFPKVQWRALDEINAGVCDGMTYEEVKKNMPEEYESRKKDKLRYRYPRGESYLDVIQRLEPVIIELERQRAPVVVISHQAVLRALYAYFADRPLKEIPQIEMPLHTIIEIQMGVSGVQEKRYKLMD.

Disordered regions lie at residues 1-23 (MGSG…GGQL) and 213-245 (RSLS…DGSP). Gly-2 is lipidated: N-myristoyl glycine. One can recognise a CBM20 domain in the interval 17–122 (NGGGGQLYVS…GDARLALFRL (106 aa)). Over residues 213-232 (RSLSASGSFRNDSTPKAAQR) the composition is skewed to polar residues. The residue at position 220 (Ser-220) is a Phosphoserine; by CPK3. Residues Ser-276 and Ser-295 each carry the phosphoserine modification. The tract at residues 301–549 (SLSASSFLID…VFFLVNTHLT (249 aa)) is 6-phosphofructo-2-kinase. Ser-303 carries the post-translational modification Phosphoserine; by CPK3. 349 to 357 (GLPARGKTF) provides a ligand contact to ATP. Residues Arg-382 and Arg-406 each contribute to the beta-D-fructose 6-phosphate site. Residue Asp-431 is part of the active site. The beta-D-fructose 6-phosphate site is built by Thr-433 and Arg-439. Cys-460 is an active-site residue. Residue 469 to 474 (NIRLKI) participates in ATP binding. Beta-D-fructose 6-phosphate contacts are provided by Arg-496 and Tyr-500. Residues 550-744 (PRPILLTRHG…VQEKRYKLMD (195 aa)) form a fructose-2,6-bisphosphatase region. Arg-557 lines the beta-D-fructose 2,6-bisphosphate pocket. His-558 functions as the Tele-phosphohistidine intermediate in the catalytic mechanism. 2 residues coordinate beta-D-fructose 2,6-bisphosphate: Asn-564 and Gly-570. The active-site Proton donor/acceptor is Glu-630. Beta-D-fructose 2,6-bisphosphate is bound by residues Tyr-641, Arg-655, Lys-659, Tyr-670, Gln-697, and Arg-701. Residue 652-655 (YESR) coordinates ATP. 697–701 (QAVLR) is an ATP binding site.

This sequence in the C-terminal section; belongs to the phosphoglycerate mutase family. Interacts with 14-3-3 proteins; these interactions may regulate both nitrate assimilation and sucrose/starch partitioning in leaves during the diurnal cycle. Phosphorylation at Ser-220 and Ser-303 by CPK3 promotes 14-3-3 proteins binding.

It localises to the membrane. It is found in the cytoplasm. It carries out the reaction beta-D-fructose 2,6-bisphosphate + H2O = beta-D-fructose 6-phosphate + phosphate. It catalyses the reaction beta-D-fructose 6-phosphate + ATP = beta-D-fructose 2,6-bisphosphate + ADP + H(+). Its activity is regulated as follows. 6-phosphofructo-2-kinase activity is activated by pyruvate. 6-phosphofructo-2-kinase activity is inhibited by PPi, phosphoenolpyruvate and 2-phosphoglycerate. Fructose-2,6-bisphosphatase activity is inhibited by pyruvate, fructose 1,6-bisphosphate and 6-phosphogluconate. Functionally, synthesis and degradation of fructose 2,6-bisphosphate. Regulates carbon partitioning between sucrose versus starch during the diurnal cycle. This is 6-phosphofructo-2-kinase/fructose-2,6-bisphosphatase (FKFBP) from Arabidopsis thaliana (Mouse-ear cress).